A 462-amino-acid chain; its full sequence is Retinoic acid receptor alpha (462 aa).

The modulating stretch occupies residues 1–87; it reads MASNSSSCPT…PPPLPRIYKP (87 aa). Positions 52–64 are enriched in polar residues; the sequence is GYSTPSPATIETQ. Residues 52–77 form a disordered region; the sequence is GYSTPSPATIETQSSSSEEIVPSPPS. Ser77 is modified (phosphoserine; by CDK7). 2 NR C4-type zinc fingers span residues 88–108 and 124–148; these read CFVCQDKSSGYHYGVSACEGC and CHRDKNCIINKVTRNRCQYCRLQKC. The segment at residues 88–153 is a DNA-binding region (nuclear receptor); it reads CFVCQDKSSG…RLQKCFDVGM (66 aa). Residue Ser96 is modified to Phosphoserine; by PKB/AKT1. The tract at residues 154 to 182 is hinge; sequence SKESVRNDRNKKKKEAPKPECSESYTLTP. Residues Lys166 and Lys171 each participate in a glycyl lysine isopeptide (Lys-Gly) (interchain with G-Cter in SUMO) cross-link. The 235-residue stretch at 183–417 folds into the NR LBD domain; that stretch reads EVGELIEKVR…PLIQEMLENS (235 aa). Ser219 carries the post-translational modification Phosphoserine; by PKA. Cys235 is an all-trans-retinoate binding site. Residues 254–258 carry the UBR5-degron motif; that stretch reads IADQI. Residue Ser287 participates in all-trans-retinoate binding. Lys347 is subject to N6,N6,N6-trimethyllysine. A Phosphoserine; by PKA and RPS6KA5 modification is found at Ser369. A Glycyl lysine isopeptide (Lys-Gly) (interchain with G-Cter in SUMO) cross-link involves residue Lys399. The interval 404–419 is required for binding corepressor NCOR1; it reads GSMPPLIQEMLENSEG. Residues 408–416 carry the 9aaTAD motif; it reads PLIQEMLEN. A disordered region spans residues 420–462; the sequence is LDTLSGQSGGGTRDGGGLAPPPGSCSPSLSPSSHRSSPATQSP. Residues 426–437 are compositionally biased toward gly residues; the sequence is QSGGGTRDGGGL. Over residues 444 to 462 the composition is skewed to low complexity; it reads CSPSLSPSSHRSSPATQSP.

This sequence belongs to the nuclear hormone receptor family. NR1 subfamily. Heterodimer; with RXRA. Binds DNA preferentially as a heterodimer. RXRA serves as enhancer to induce RARA binding to RARE. Interacts with RXRG. Interacts with NCOA3 and NCOA6 coactivators, leading to a strong increase of transcription of target genes. Interacts with NCOA7; the interaction requires ligand-binding. Interacts (via the ligand-binding domain) with PRAME; interaction is direct and ligand (retinoic acid)-dependent. Interacts with PRKAR1A; the interaction negatively regulates RARA transcriptional activity. Interacts with NCOR1; the interaction occurs in the absence of ligand and represses transcriptional activity. Interacts with NCOR2. Interacts with PRMT2. Interacts with LRIF1. Interacts with ASXL1 and NCOA1. Interacts with ACTN4. Interacts with CDK7; the interaction is enhanced by interaction with GTF2H3. Interacts with GTF2H3; the interaction requires prior phosphorylation on Ser-369 which then enhances interaction with CDK7. In a complex with HDAC3, HDAC5 and HDAC7; the HDACs serve as corepressors of RARA, causing its deacetylation and inhibition of RARE DNA element binding; association with HDAC3, HDAC5 and HDAC7 is increased upon oscillatory shear stress. In the absence of hormonal ligand, interacts with TACC1. Phosphorylated on serine and threonine residues. Phosphorylation does not change during cell cycle. Phosphorylation on Ser-77 is crucial for the N-terminal AF1 transcriptional activity. Under stress conditions, MAPK8 enhances phosphorylation on Thr-181, Ser-445 and Ser-461 leading to RARA ubiquitination and degradation. Phosphorylation by AKT1 inhibits the transactivation activity. On retinoic acid stimulation, phosphorylation on Ser-369 by RPS6KA5 promotes interaction with GTF2H3 and the CDK7-mediated phosphorylation of Ser-77. Post-translationally, ubiquitinated by UBR5, leading to its degradation: UBR5 specifically recognizes and binds ligand-bound RARA when it is not associated with coactivators (NCOAs). In presence of NCOAs, the UBR5-degron is not accessible, preventing its ubiquitination and degradation. In terms of processing, sumoylated with SUMO2, mainly on Lys-399 which is also required for SENP6 binding. On all-trans retinoic acid (ATRA) binding, a conformational change may occur that allows sumoylation on two additional site, Lys-166 and Lys-171. Probably desumoylated by SENP6. Sumoylation levels determine nuclear localization and regulate ATRA-mediated transcriptional activity. Acetylated; acetylation is increased upon pulsatile shear stress and decreased upon oscillatory shear stress. Expressed in Sertoli cells and germ cells.

It is found in the nucleus. Its subcellular location is the cytoplasm. Its function is as follows. Receptor for retinoic acid. Retinoic acid receptors bind as heterodimers to their target response elements in response to their ligands, all-trans or 9-cis retinoic acid, and regulate gene expression in various biological processes. The RXR/RAR heterodimers bind to the retinoic acid response elements (RARE) composed of tandem 5'-AGGTCA-3' sites known as DR1-DR5. In the absence of ligand, the RXR-RAR heterodimers associate with a multiprotein complex containing transcription corepressors that induce histone deacetylation, chromatin condensation and transcriptional suppression. On ligand binding, the corepressors dissociate from the receptors and associate with the coactivators leading to transcriptional activation. Formation of heterocomplex with histone deacetylases might lead to inhibition of RARE DNA element binding and to transcriptional repression. Transcriptional activation and RARE DNA element binding might be supported by the transcription factor KLF2. RARA plays an essential role in the regulation of retinoic acid-induced germ cell development during spermatogenesis. Has a role in the survival of early spermatocytes at the beginning prophase of meiosis. In Sertoli cells, may promote the survival and development of early meiotic prophase spermatocytes. In concert with RARG, required for skeletal growth, matrix homeostasis and growth plate function. Together with RXRA, positively regulates microRNA-10a expression, thereby inhibiting the GATA6/VCAM1 signaling response to pulsatile shear stress in vascular endothelial cells. In association with HDAC3, HDAC5 and HDAC7 corepressors, plays a role in the repression of microRNA-10a and thereby promotes the inflammatory response. This is Retinoic acid receptor alpha (Rara) from Mus musculus (Mouse).